The primary structure comprises 70 residues: Small ribosomal subunit protein bS21 (70 aa).

A disordered region spans residues 39-70 (EKPTTERKRKKAAAVSRTRKRLRSQMLPKKLY). A compositionally biased stretch (basic residues) spans 45-61 (RKRKKAAAVSRTRKRLR).

Belongs to the bacterial ribosomal protein bS21 family.

The chain is Small ribosomal subunit protein bS21 from Ralstonia nicotianae (strain ATCC BAA-1114 / GMI1000) (Ralstonia solanacearum).